The sequence spans 378 residues: Beta-1,3-galactosyltransferase pvg3 (378 aa).

Residues Met1–Lys8 lie on the Cytoplasmic side of the membrane. The chain crosses the membrane as a helical; Signal-anchor for type II membrane protein span at residues Ile9 to Asn29. Residues Arg30–Val378 are Lumenal-facing. N-linked (GlcNAc...) asparagine glycosylation is found at Asn53, Asn97, Asn180, and Asn354.

It belongs to the glycosyltransferase 31 family.

The protein resides in the endoplasmic reticulum membrane. It is found in the golgi apparatus. The protein localises to the golgi stack membrane. The catalysed reaction is 3-O-(beta-D-galactosyl-(1-&gt;4)-beta-D-xylosyl)-L-seryl-[protein] + UDP-alpha-D-galactose = 3-O-(beta-D-galactosyl-(1-&gt;3)-beta-D-galactosyl-(1-&gt;4)-beta-D-xylosyl)-L-seryl-[protein] + UDP + H(+). Its function is as follows. Involved in cell wall biogenesis. Has a role in the addition of Gal-beta1,3 moeities to galactomannans and their subsequent pyruvylation. Has a role in meiosis. This chain is Beta-1,3-galactosyltransferase pvg3 (pvg3), found in Schizosaccharomyces pombe (strain 972 / ATCC 24843) (Fission yeast).